The primary structure comprises 181 residues: ABC transporter E family member 3 (181 aa).

An ABC transporter domain is found at 20-176 (SQIIVMLGEN…KAAFARFHNG (157 aa)). 27-34 (GENGTGKT) contacts ATP.

The protein belongs to the ABC transporter superfamily. ABCE family. In terms of tissue distribution, mostly expressed in roots and leaves, and, to a lower extent, in stems, flowers and siliques.

The polypeptide is ABC transporter E family member 3 (ABCE3) (Arabidopsis thaliana (Mouse-ear cress)).